The primary structure comprises 303 residues: uncharacterized protein (303 aa).

Helical transmembrane passes span 55–77 (FLVKVAVLCMFISMTLASFLFIQ), 92–111 (PAVFSIFTVICIFMTYTKII), 208–230 (FSLPHYMSLMFCGSIIVVYATSL), and 240–257 (IPHIFIFLLLIIFLKILI).

The protein localises to the cell membrane. This is an uncharacterized protein from Bacillus subtilis (strain 168).